Reading from the N-terminus, the 309-residue chain is HPr kinase/phosphorylase (309 aa).

Active-site residues include His138 and Lys159. 153–160 (GQSGVGKS) contributes to the ATP binding site. Ser160 provides a ligand contact to Mg(2+). Catalysis depends on Asp177, which acts as the Proton acceptor; for phosphorylation activity. Proton donor; for dephosphorylation activity. An important for the catalytic mechanism of both phosphorylation and dephosphorylation region spans residues 201 to 210 (LEIRGLGIIN). Glu202 serves as a coordination point for Mg(2+). Arg243 is a catalytic residue. The important for the catalytic mechanism of dephosphorylation stretch occupies residues 264–269 (PVRPGR).

It belongs to the HPrK/P family. Homohexamer. Mg(2+) is required as a cofactor.

It carries out the reaction [HPr protein]-L-serine + ATP = [HPr protein]-O-phospho-L-serine + ADP + H(+). The catalysed reaction is [HPr protein]-O-phospho-L-serine + phosphate + H(+) = [HPr protein]-L-serine + diphosphate. In terms of biological role, catalyzes the ATP- as well as the pyrophosphate-dependent phosphorylation of a specific serine residue in HPr, a phosphocarrier protein of the phosphoenolpyruvate-dependent sugar phosphotransferase system (PTS). HprK/P also catalyzes the pyrophosphate-producing, inorganic phosphate-dependent dephosphorylation (phosphorolysis) of seryl-phosphorylated HPr (P-Ser-HPr). The two antagonistic activities of HprK/P are regulated by several intracellular metabolites, which change their concentration in response to the absence or presence of rapidly metabolisable carbon sources (glucose, fructose, etc.) in the growth medium. Also phosphorylates/dephosphorylates the HPr-like catabolite repression protein crh on a specific serine residue. Therefore, by controlling the phosphorylation state of HPr and crh, HPrK/P is a sensor enzyme that plays a major role in the regulation of carbon metabolism and sugar transport: it mediates carbon catabolite repression (CCR), and regulates PTS-catalyzed carbohydrate uptake and inducer exclusion. The chain is HPr kinase/phosphorylase from Bacillus cereus (strain B4264).